Here is a 132-residue protein sequence, read N- to C-terminus: MPLYEHVFISRQDLSNAQAEGLIEHFSTVLADNGGKVVDREYWGVKTMAYKINKNRKGHYAFLKSDAPSAAVQEMERLMRLHDDVMRVLTIKVDKHAEGPSIQMQKRDERERGDRGDRPDRGDRGERGGFRR.

The disordered stretch occupies residues 96–132 (HAEGPSIQMQKRDERERGDRGDRPDRGDRGERGGFRR). Over residues 105–132 (QKRDERERGDRGDRPDRGDRGERGGFRR) the composition is skewed to basic and acidic residues.

The protein belongs to the bacterial ribosomal protein bS6 family.

Its function is as follows. Binds together with bS18 to 16S ribosomal RNA. The chain is Small ribosomal subunit protein bS6 from Cereibacter sphaeroides (strain ATCC 17025 / ATH 2.4.3) (Rhodobacter sphaeroides).